The sequence spans 74 residues: Large ribosomal subunit protein uL29 (74 aa).

This sequence belongs to the universal ribosomal protein uL29 family.

The chain is Large ribosomal subunit protein uL29 from Cyanothece sp. (strain PCC 7425 / ATCC 29141).